The following is a 952-amino-acid chain: Inactive atromentin synthetase invA6 (952 aa).

The adenylation (A) domain stretch occupies residues 58 to 462 (DSSVQTRSFS…NGRIKDTVIV (405 aa)). The 79-residue stretch at 594 to 672 (APSTETEKTL…SLAKYVDSLV (79 aa)) folds into the Carrier domain. The interval 599 to 669 (TEKTLGRLYA…VISSLAKYVD (71 aa)) is thiolation and peptide carrier (T) domain. Ser631 bears the O-(pantetheine 4'-phosphoryl)serine mark. Positions 695-939 (PIFMVHPGIG…LMDFDHVSGF (245 aa)) are thioesterase (TE) domain.

The protein belongs to the ATP-dependent AMP-binding enzyme family.

In terms of biological role, inactive atromentin synthetase homolog. Does not accept 4-hydroxyphenylpyruvate (4-HPP) as substrate. Both the adenylation (A) and the thioesterase (TE) domain of the invA6 enzyme are inactive. The chain is Inactive atromentin synthetase invA6 (invA6) from Paxillus involutus (Naked brimcap).